Reading from the N-terminus, the 28-residue chain is Alkaline serine protease NJP (28 aa).

Inhibited by PMSF. Not or very weakly inhibited by EDTA, EGTA, beta-mercaptoethanol, benzamidine, aprotinin, iodoacetic acid, pepstatin A and SBTI. Alkaline thrombin-like serine protease. Has fibrinolytic and fibrinogenolytic but not plasminogenolytic activity. Cleaves fibrinogen chains Aalpha, Bbeta and gamma chains in that order. Cleaves after Arg and Lys residues. This Hediste japonica (Polychaete worm) protein is Alkaline serine protease NJP.